A 348-amino-acid chain; its full sequence is Competence protein ComGA (348 aa).

145–152 provides a ligand contact to ATP; sequence GATGSGKT.

It belongs to the GSP E family.

The protein resides in the cell membrane. Its function is as follows. Required for uptake of DNA by competent cells. The chain is Competence protein ComGA (comGA) from Halalkalibacterium halodurans (strain ATCC BAA-125 / DSM 18197 / FERM 7344 / JCM 9153 / C-125) (Bacillus halodurans).